The sequence spans 356 residues: DNA polymerase IV (356 aa).

The region spanning 7-188 (IIHIDMDAFY…IPVTKFYGVG (182 aa)) is the UmuC domain. Mg(2+)-binding residues include Asp-11 and Asp-106. The active site involves Glu-107.

This sequence belongs to the DNA polymerase type-Y family. Monomer. Mg(2+) is required as a cofactor.

The protein localises to the cytoplasm. It catalyses the reaction DNA(n) + a 2'-deoxyribonucleoside 5'-triphosphate = DNA(n+1) + diphosphate. In terms of biological role, poorly processive, error-prone DNA polymerase involved in untargeted mutagenesis. Copies undamaged DNA at stalled replication forks, which arise in vivo from mismatched or misaligned primer ends. These misaligned primers can be extended by PolIV. Exhibits no 3'-5' exonuclease (proofreading) activity. May be involved in translesional synthesis, in conjunction with the beta clamp from PolIII. This chain is DNA polymerase IV, found in Listeria monocytogenes serotype 4a (strain HCC23).